We begin with the raw amino-acid sequence, 115 residues long: Large ribosomal subunit protein bL20 (115 aa).

This sequence belongs to the bacterial ribosomal protein bL20 family.

Functionally, binds directly to 23S ribosomal RNA and is necessary for the in vitro assembly process of the 50S ribosomal subunit. It is not involved in the protein synthesizing functions of that subunit. This chain is Large ribosomal subunit protein bL20, found in Prochlorococcus marinus (strain MIT 9303).